The following is a 180-amino-acid chain: Small ribosomal subunit protein uS5 (180 aa).

The 64-residue stretch at 13-76 (LEERVVQINR…EAAKKNLIRV (64 aa)) folds into the S5 DRBM domain.

The protein belongs to the universal ribosomal protein uS5 family. As to quaternary structure, part of the 30S ribosomal subunit. Contacts proteins S4 and S8.

With S4 and S12 plays an important role in translational accuracy. Its function is as follows. Located at the back of the 30S subunit body where it stabilizes the conformation of the head with respect to the body. This Roseiflexus sp. (strain RS-1) protein is Small ribosomal subunit protein uS5.